Here is a 269-residue protein sequence, read N- to C-terminus: MVRVAIAGAAGRMGRNLIKAVNGSQFAVLAAASERPESSLIGVDVGEMAGLGKSGILIVDDLAKVTDDFDVIIDFTLPISTLKNIELCQEHNKAIVIGTTGFSEPGKEIIDQASKEIPVVMAPNYSVGVNLVFKLLEKAAKVMGDYCDIEIVEAHHRYKVDAPSGTAIGMGEAIAGAMGNKLEDVAVYAREGITGERSKDEIGFATIRAGDIVGEHTAMFADIGERVEITHKATDRMTFANGAVRASHWLHKKEPGFYTMHDVLNLDQI.

NAD(+) is bound by residues 8–13 (GAAGRM) and Glu-34. Residue Arg-35 participates in NADP(+) binding. NAD(+)-binding positions include 98 to 100 (GTT) and 122 to 125 (APNY). His-155 functions as the Proton donor/acceptor in the catalytic mechanism. His-156 is a binding site for (S)-2,3,4,5-tetrahydrodipicolinate. Catalysis depends on Lys-159, which acts as the Proton donor. Residue 165–166 (GT) coordinates (S)-2,3,4,5-tetrahydrodipicolinate.

It belongs to the DapB family.

It localises to the cytoplasm. It carries out the reaction (S)-2,3,4,5-tetrahydrodipicolinate + NAD(+) + H2O = (2S,4S)-4-hydroxy-2,3,4,5-tetrahydrodipicolinate + NADH + H(+). The enzyme catalyses (S)-2,3,4,5-tetrahydrodipicolinate + NADP(+) + H2O = (2S,4S)-4-hydroxy-2,3,4,5-tetrahydrodipicolinate + NADPH + H(+). Its pathway is amino-acid biosynthesis; L-lysine biosynthesis via DAP pathway; (S)-tetrahydrodipicolinate from L-aspartate: step 4/4. Catalyzes the conversion of 4-hydroxy-tetrahydrodipicolinate (HTPA) to tetrahydrodipicolinate. The chain is 4-hydroxy-tetrahydrodipicolinate reductase from Aliivibrio fischeri (strain ATCC 700601 / ES114) (Vibrio fischeri).